Here is a 176-residue protein sequence, read N- to C-terminus: Inner membrane protein p54 (176 aa).

A helical membrane pass occupies residues 32-52 (YTILIAIVVLIIIIIVLIYLF). Positions 82-176 (VTPQPGIAKP…YTHKDLENSL (95 aa)) are disordered. Positions 123–154 (GMAAGGPAAASAPAHPAELYTTATTQNTASQT) are enriched in low complexity. An interaction with host DYNLL1 region spans residues 142–154 (YTTATTQNTASQT).

It belongs to the asfivirus envelope protein p54 family. Interacts with the host light chain cytoplasmic dynein DYNLL1; this interaction is critical for intracellular microtubule-dependent virus transport toward viral factories.

The protein localises to the virion membrane. The protein resides in the host cytoplasm. It is found in the host cytoskeleton. Its subcellular location is the host endoplasmic reticulum membrane. Inner envelope protein involved, through its interaction with host dynein, in the intracellular microtubule-dependent transport of viral capsid toward viral factories. Seems to induce caspase-3 activation and apoptosis. Plays a role in virion morphogenesis by recruiting and transforming the host ER membranes into the precursors of the viral envelope. Involved in virus attachment to the host cell. This chain is Inner membrane protein p54, found in African swine fever virus (isolate Tick/Malawi/Lil 20-1/1983) (ASFV).